Reading from the N-terminus, the 364-residue chain is Cobalt-precorrin-5B C(1)-methyltransferase (364 aa).

The protein belongs to the CbiD family.

The enzyme catalyses Co-precorrin-5B + S-adenosyl-L-methionine = Co-precorrin-6A + S-adenosyl-L-homocysteine. The protein operates within cofactor biosynthesis; adenosylcobalamin biosynthesis; cob(II)yrinate a,c-diamide from sirohydrochlorin (anaerobic route): step 6/10. Its function is as follows. Catalyzes the methylation of C-1 in cobalt-precorrin-5B to form cobalt-precorrin-6A. The protein is Cobalt-precorrin-5B C(1)-methyltransferase of Pseudomonas putida (strain ATCC 47054 / DSM 6125 / CFBP 8728 / NCIMB 11950 / KT2440).